Reading from the N-terminus, the 154-residue chain is Xanthine-guanine phosphoribosyltransferase (154 aa).

Residues 37 to 38 (RG), Arg69, and 88 to 96 (EDLVDSGDT) each bind 5-phospho-alpha-D-ribose 1-diphosphate. Arg69 is a binding site for GMP. Mg(2+) is bound at residue Asp89. The guanine site is built by Asp92 and Ile135. Xanthine is bound by residues Asp92 and Ile135. GMP-binding positions include 92–96 (DSGDT) and 134–135 (WI).

Belongs to the purine/pyrimidine phosphoribosyltransferase family. XGPT subfamily. In terms of assembly, homotetramer. It depends on Mg(2+) as a cofactor.

The protein resides in the cell inner membrane. The enzyme catalyses GMP + diphosphate = guanine + 5-phospho-alpha-D-ribose 1-diphosphate. It carries out the reaction XMP + diphosphate = xanthine + 5-phospho-alpha-D-ribose 1-diphosphate. The catalysed reaction is IMP + diphosphate = hypoxanthine + 5-phospho-alpha-D-ribose 1-diphosphate. It participates in purine metabolism; GMP biosynthesis via salvage pathway; GMP from guanine: step 1/1. The protein operates within purine metabolism; XMP biosynthesis via salvage pathway; XMP from xanthine: step 1/1. Its function is as follows. Purine salvage pathway enzyme that catalyzes the transfer of the ribosyl-5-phosphate group from 5-phospho-alpha-D-ribose 1-diphosphate (PRPP) to the N9 position of the 6-oxopurines guanine and xanthine to form the corresponding ribonucleotides GMP (guanosine 5'-monophosphate) and XMP (xanthosine 5'-monophosphate), with the release of PPi. To a lesser extent, also acts on hypoxanthine. This Vibrio campbellii (strain ATCC BAA-1116) protein is Xanthine-guanine phosphoribosyltransferase.